The chain runs to 706 residues: Envelope glycoprotein H (706 aa).

The signal sequence occupies residues 1-18; that stretch reads MQLLCVFCLVLLWEVGAA. Topologically, residues 19 to 682 are virion surface; the sequence is SLSEVKLHLD…LYEERAHVVL (664 aa). Asparagine 60 carries N-linked (GlcNAc...) asparagine; by host glycosylation. The segment at 165-229 is interaction with gL; it reads DKFQYTGAMT…QSGDYSLVIV (65 aa). A disulfide bridge links cysteine 278 with cysteine 335. N-linked (GlcNAc...) asparagine; by host glycosylation occurs at asparagine 435. 2 cysteine pairs are disulfide-bonded: cysteine 454–cysteine 478 and cysteine 534–cysteine 587. Residues asparagine 549 and asparagine 604 are each glycosylated (N-linked (GlcNAc...) asparagine; by host). A disulfide bridge connects residues cysteine 612 and cysteine 615. A glycan (N-linked (GlcNAc...) asparagine; by host) is linked at asparagine 664. The helical transmembrane segment at 683-703 threads the bilayer; it reads AIILYFIAFALGIFLVHKIVM. Residues 704 to 706 lie on the Intravirion side of the membrane; sequence FFL.

The protein belongs to the herpesviridae glycoprotein H family. In terms of assembly, interacts with glycoprotein L (gL); this interaction is necessary for the correct processing and cell surface expression of gH. The heterodimer gH/gL seems to interact with gB trimers during fusion. The heterodimer gH/gL interacts with host EPHA2 to facilitate virus internalization and fusion. Interacts with glycoprotein 42/BZLF2. N-glycosylated, O-glycosylated, and sialylated.

The protein localises to the virion membrane. The protein resides in the host cell membrane. Its subcellular location is the host endosome membrane. In terms of biological role, the heterodimer glycoprotein H-glycoprotein L is required for the fusion of viral and plasma membranes leading to virus entry into the host cell. Following initial binding to host receptor, membrane fusion is mediated by the fusion machinery composed of gB and the heterodimer gH/gL. May also be involved in the fusion between the virion envelope and the outer nuclear membrane during virion morphogenesis. The heterodimer gH/gL targets also host EPHA2 to promote viral entry. The sequence is that of Envelope glycoprotein H from Homo sapiens (Human).